The sequence spans 658 residues: MVLFYRAHWRDYKNDQVRIMMNLTTLTHRDALCLNARFTSREEAIHALTQRLAALGKISSTEQFLEEVYRRESLGPTALGEGLAVPHGKTAAVKEAAFAVATLSEPLQWEGVDGPEAVDLVVLLAIPPNEAGTTHMQLLTALTTRLADDEIRARIQSATTPDELLSALDDKGGTQPSASFSNAPTIVCVTACPAGIAHTYMAAEYLEKAGRKLGVNVYVEKQGANGIEGRLTADQLNSATACIFAAEVAIKESERFNGIPALSVPVAEPIRHAEALIQQALTLKRSDETRTVQQDTQPVKSVKTELKQALLSGISFAVPLIVAGGTVLAVAVLLSQIFGLQDLFNEENSWLWMYRKLGGGLLGILMVPVLAAYTAYSLADKPALAPGFAAGLAANMIGSGFLGAVVGGLIAGYLMRWVKNHLRLSSKFNGFLTFYLYPVLGTLGAGSLMLFVVGEPVAWINNSLTAWLNGLSGSNALLLGAILGFMCSFDLGGPVNKAAYAFCLGAMANGVYGPYAIFASVKMVSAFTVTASTMLAPRLFKEFEIETGKSTWLLGLAGITEGAIPMAIEDPLRVIGSFVLGSMVTGAIVGAMNIGLSTPGAGIFSLFLLHDNGAGGVMAAIGWFGAALVGAAISTAILLMWRRHAVKHGNYLTDGVMP.

Residues 1-313 (MVLFYRAHWR…TELKQALLSG (313 aa)) are Periplasmic-facing. The 147-residue stretch at 25–171 (TLTHRDALCL…DELLSALDDK (147 aa)) folds into the PTS EIIA type-2 domain. The active-site Tele-phosphohistidine intermediate; for EIIA activity is histidine 87. Histidine 87 carries the post-translational modification Phosphohistidine; by HPr. The PTS EIIB type-2 domain maps to 186-282 (IVCVTACPAG…AEALIQQALT (97 aa)). The active-site Phosphocysteine intermediate; for EIIB activity is the cysteine 192. Cysteine 192 carries the post-translational modification Phosphocysteine; by EIIA. The region spanning 306 to 641 (LKQALLSGIS…AISTAILLMW (336 aa)) is the PTS EIIC type-2 domain. Residues 314-334 (ISFAVPLIVAGGTVLAVAVLL) traverse the membrane as a helical segment. At 335–358 (SQIFGLQDLFNEENSWLWMYRKLG) the chain is on the cytoplasmic side. The helical transmembrane segment at 359–379 (GGLLGILMVPVLAAYTAYSLA) threads the bilayer. At 380–389 (DKPALAPGFA) the chain is on the periplasmic side. Residues 390–410 (AGLAANMIGSGFLGAVVGGLI) traverse the membrane as a helical segment. Over 411-433 (AGYLMRWVKNHLRLSSKFNGFLT) the chain is Cytoplasmic. The helical transmembrane segment at 434-454 (FYLYPVLGTLGAGSLMLFVVG) threads the bilayer. The Periplasmic portion of the chain corresponds to 455–474 (EPVAWINNSLTAWLNGLSGS). A helical transmembrane segment spans residues 475–495 (NALLLGAILGFMCSFDLGGPV). The Cytoplasmic portion of the chain corresponds to 496–500 (NKAAY). The helical transmembrane segment at 501 to 521 (AFCLGAMANGVYGPYAIFASV) threads the bilayer. Residues 522–551 (KMVSAFTVTASTMLAPRLFKEFEIETGKST) are Periplasmic-facing. Residues 552-572 (WLLGLAGITEGAIPMAIEDPL) traverse the membrane as a helical segment. Arginine 573 is a topological domain (cytoplasmic). Residues 574 to 594 (VIGSFVLGSMVTGAIVGAMNI) form a helical membrane-spanning segment. The Periplasmic portion of the chain corresponds to 595-620 (GLSTPGAGIFSLFLLHDNGAGGVMAA). The helical transmembrane segment at 621–641 (IGWFGAALVGAAISTAILLMW) threads the bilayer. Residues 642 to 658 (RRHAVKHGNYLTDGVMP) lie on the Cytoplasmic side of the membrane.

It localises to the cell inner membrane. The enzyme catalyses (2R)-2-O-(alpha-D-mannosyl)-glycerate(out) + N(pros)-phospho-L-histidyl-[protein] = (2R)-2-O-(6-phospho-alpha-D-mannosyl)-glycerate(in) + L-histidyl-[protein]. Functionally, the phosphoenolpyruvate-dependent sugar phosphotransferase system (sugar PTS), a major carbohydrate active transport system, catalyzes the phosphorylation of incoming sugar substrates concomitantly with their translocation across the cell membrane. This system is involved in mannosyl-D-glycerate transport. Also involved in thermoinduction of ompC. This chain is PTS system 2-O-alpha-mannosyl-D-glycerate-specific EIIABC component, found in Escherichia coli (strain K12).